The chain runs to 136 residues: Large ribosomal subunit protein uL16 (136 aa).

Belongs to the universal ribosomal protein uL16 family. In terms of assembly, part of the 50S ribosomal subunit.

Its function is as follows. Binds 23S rRNA and is also seen to make contacts with the A and possibly P site tRNAs. This is Large ribosomal subunit protein uL16 from Aggregatibacter actinomycetemcomitans (Actinobacillus actinomycetemcomitans).